The chain runs to 371 residues: Putative glutamate--cysteine ligase 2 (371 aa).

This sequence belongs to the glutamate--cysteine ligase type 2 family. YbdK subfamily.

It catalyses the reaction L-cysteine + L-glutamate + ATP = gamma-L-glutamyl-L-cysteine + ADP + phosphate + H(+). Its function is as follows. ATP-dependent carboxylate-amine ligase which exhibits weak glutamate--cysteine ligase activity. This Burkholderia cenocepacia (strain HI2424) protein is Putative glutamate--cysteine ligase 2.